Consider the following 269-residue polypeptide: GTP cyclohydrolase FolE2 (269 aa).

It belongs to the GTP cyclohydrolase IV family.

It catalyses the reaction GTP + H2O = 7,8-dihydroneopterin 3'-triphosphate + formate + H(+). It functions in the pathway cofactor biosynthesis; 7,8-dihydroneopterin triphosphate biosynthesis; 7,8-dihydroneopterin triphosphate from GTP: step 1/1. Its function is as follows. Converts GTP to 7,8-dihydroneopterin triphosphate. The chain is GTP cyclohydrolase FolE2 from Thiobacillus denitrificans (strain ATCC 25259 / T1).